The sequence spans 589 residues: Phenylalanine--tRNA ligase beta subunit (589 aa).

The 78-residue stretch at 302–379 (LAYRKEMVRA…IAYGYSNIQM (78 aa)) folds into the B5 domain. Mg(2+) contacts are provided by D357, D363, E366, and D367.

The protein belongs to the phenylalanyl-tRNA synthetase beta subunit family. Type 2 subfamily. In terms of assembly, heterotetramer; dimer of two heterodimers formed by FARSA and FARSB. Mg(2+) serves as cofactor.

Its subcellular location is the cytoplasm. The enzyme catalyses tRNA(Phe) + L-phenylalanine + ATP = L-phenylalanyl-tRNA(Phe) + AMP + diphosphate + H(+). This is Phenylalanine--tRNA ligase beta subunit (FARSB) from Pongo abelii (Sumatran orangutan).